Here is a 102-residue protein sequence, read N- to C-terminus: uncharacterized protein (102 aa).

The tract at residues 77–102 is disordered; that stretch reads RKDGDEKSKPNSKDYASRPIRDHSKI.

This is an uncharacterized protein from Microplitis demolitor (Parasitoid wasp).